A 621-amino-acid chain; its full sequence is Chaperone protein HtpG (621 aa).

The interval 1–341 (MSNQEYTFQT…SEDLPLNVSR (341 aa)) is a; substrate-binding. The b stretch occupies residues 342-547 (EILQQNKILA…GDEPNAMMAN (206 aa)). The segment at 548–621 (WMRQMGQSVP…RLNSVLLKAL (74 aa)) is c.

Belongs to the heat shock protein 90 family. As to quaternary structure, homodimer.

Its subcellular location is the cytoplasm. Molecular chaperone. Has ATPase activity. The protein is Chaperone protein HtpG of Helicobacter pylori (strain J99 / ATCC 700824) (Campylobacter pylori J99).